The chain runs to 89 residues: Cell division topological specificity factor (89 aa).

Belongs to the MinE family.

Prevents the cell division inhibition by proteins MinC and MinD at internal division sites while permitting inhibition at polar sites. This ensures cell division at the proper site by restricting the formation of a division septum at the midpoint of the long axis of the cell. The protein is Cell division topological specificity factor of Yersinia pestis bv. Antiqua (strain Angola).